The sequence spans 123 residues: Fluoride-specific ion channel FluC (123 aa).

A run of 4 helical transmembrane segments spans residues 1–21 (MQWL…GWLA), 32–52 (LGTL…LVWF), 66–86 (FVIT…VEVF), and 99–119 (GLIG…FYFF). Na(+)-binding residues include glycine 73 and threonine 76.

It belongs to the fluoride channel Fluc/FEX (TC 1.A.43) family.

It localises to the cell inner membrane. The enzyme catalyses fluoride(in) = fluoride(out). With respect to regulation, na(+) is not transported, but it plays an essential structural role and its presence is essential for fluoride channel function. Functionally, fluoride-specific ion channel. Important for reducing fluoride concentration in the cell, thus reducing its toxicity. This chain is Fluoride-specific ion channel FluC, found in Psychrobacter cryohalolentis (strain ATCC BAA-1226 / DSM 17306 / VKM B-2378 / K5).